The following is an 827-amino-acid chain: Protein Jade-1 (827 aa).

The interval 1 to 35 (MKRVCLPSSSEDSDDNGSLSTSWSQHSRSLPSFRH) is disordered. The span at 16-30 (NGSLSTSWSQHSRSL) shows a compositional bias: polar residues. The segment at 200-250 (DVVCDVCQSPDGEDGNEMVFCDKCNICVHQACYGILKVPEGSWLCRTCALG) adopts a PHD-type 1 zinc-finger fold. The C2HC pre-PHD-type zinc finger occupies 252 to 286 (QPKCLLCPKKGGAMKPTRSGTKWVHVSCALWIPEV). The segment at 310–366 (LLCSLCNEKVGACIQCSIKNCRTAFHVTCAFDHGLEMKTILTQEDEVKFKSYCPKHG) adopts a PHD-type 2 zinc-finger fold. 2 disordered regions span residues 622–705 (TVAK…SSSL) and 769–810 (RTKE…SSSS). Composition is skewed to basic and acidic residues over residues 646–661 (SRTQGDTKFDSKEKPL) and 669–682 (KHTEPPERPAEKKR). Polar residues predominate over residues 692-705 (ATASSNKKQCSSSL).

The protein belongs to the JADE family. Component of the HBO1 complex composed.

The protein resides in the nucleus. It localises to the chromosome. It is found in the cytoplasm. Its subcellular location is the cytoskeleton. The protein localises to the cilium basal body. In terms of biological role, scaffold subunit of some HBO1 complexes, which have a histone H4 acetyltransferase activity. Plays a key role in HBO1 complex by directing KAT7/HBO1 specificity towards histone H4 acetylation (H4K5ac, H4K8ac and H4K12ac), regulating DNA replication initiation, regulating DNA replication initiation. This is Protein Jade-1 (jade1) from Xenopus laevis (African clawed frog).